The primary structure comprises 394 residues: MMDASRSQQPLDAWDDISDSEFLNIPSDEESIESQLPLIGETKGKHSVNLDKPSSSSSFHKCSEEAPKQEAVKTDDVRGLKRKSLHENSFSPMQRFRKQHLSVTLLCDQTWCEMKSVYNLLKPHIKRKEMQRTEVQIGQEIHLSRELEIQDVVPVDIRTREDGEAVKLLNMLHMIPLLEAGQRVREFPVFGVQEGVFIMGVIDELMYNQKGELVLNELKTRRQNSLPSSAQDKVNCFQVGLYKLLFDGLVRGEMKKNHIFDHLKLRSAQILGAGVQAHAKNLGVHARTFEELVETLLITVSCSDLPCIDLLQIEYFHQGSNGPIGTRVAPFDEAQIRGELQAYLSYWTGQREPKGVDIEEAWKCRSCLYEEICEWRKNRFTVSDQQAAHSSSHL.

A disordered region spans residues 42 to 79 (TKGKHSVNLDKPSSSSSFHKCSEEAPKQEAVKTDDVRG). The span at 61–79 (KCSEEAPKQEAVKTDDVRG) shows a compositional bias: basic and acidic residues. Residues cysteine 112, cysteine 364, cysteine 367, and cysteine 373 each coordinate [4Fe-4S] cluster.

Belongs to the EXO5 family. Monomer. [4Fe-4S] cluster serves as cofactor. It depends on Mg(2+) as a cofactor.

The protein localises to the nucleus. It is found in the cytoplasm. The protein resides in the cytosol. In terms of biological role, single-stranded DNA (ssDNA) bidirectional exonuclease involved in DNA repair. Probably involved in DNA repair following ultraviolet (UV) irradiation and interstrand cross-links (ICLs) damage. Has both 5'-3' and 3'-5' exonuclease activities with a strong preference for 5'-ends. The chain is Exonuclease V (exo5) from Danio rerio (Zebrafish).